The sequence spans 144 residues: MRLNTLSPAEGSKKAGKRLGRGIGSGLGKTGGRGHKGQKSRSGGGVRRGFEGGQMPLYRRLPKFGFTSRKAAITAEVRLSDLAKVEGGVVDLNTLKATNIIGIQIEFAKVILAGEVTTPVTVRGLRVTKGARAAIEAAGGKIEE.

The interval 1 to 54 is disordered; the sequence is MRLNTLSPAEGSKKAGKRLGRGIGSGLGKTGGRGHKGQKSRSGGGVRRGFEGGQ. Positions 21 to 31 are enriched in gly residues; the sequence is RGIGSGLGKTG.

Belongs to the universal ribosomal protein uL15 family. Part of the 50S ribosomal subunit.

Binds to the 23S rRNA. This Salmonella arizonae (strain ATCC BAA-731 / CDC346-86 / RSK2980) protein is Large ribosomal subunit protein uL15.